A 1046-amino-acid chain; its full sequence is Protein jim lovell (1046 aa).

A disordered region spans residues 54–109 (TSDHAPMHSTPPTTPPTPPPLPLNMSQSASAVTEAATPENSLPATPPSEGALAVPS). The segment covering 65–75 (PTTPPTPPPLP) has biased composition (pro residues). The 66-residue stretch at 140–205 (VDVTLVCAET…MYRGEISVPQ (66 aa)) folds into the BTB domain. Disordered stretches follow at residues 290 to 342 (LRRK…DAES), 355 to 501 (AERD…KLQD), 632 to 655 (PPFGGHNGGHPGNSGPGNGCPGQA), 686 to 719 (EFGPASPMSLQGPFNAPDGPPHPPSPLPFPGMSS), 758 to 791 (RDMPGGPPPFLKKKMPRPKGQHSAPRGGPPRSWT), 851 to 947 (EMLQ…APNA), and 998 to 1046 (DCKS…TGHD). Over residues 294–303 (REQESDRDLE) the composition is skewed to basic and acidic residues. Positions 315–324 (PRRKQARPRR) are enriched in basic residues. Polar residues predominate over residues 365–380 (QDNSQGEAEKISSSPA). Positions 383–412 (LVERAKEQKSMKEEGSDQPRSLNENHHQLE) are enriched in basic and acidic residues. Residues 413–432 (LDDEDDDDQDHEEEEEQDIE) show a composition bias toward acidic residues. Residues 433–443 (ELIHTTNELRR) are compositionally biased toward basic and acidic residues. Over residues 445–454 (AAAAAANAAA) the composition is skewed to low complexity. The segment covering 636–651 (GHNGGHPGNSGPGNGC) has biased composition (gly residues). Residues 703-714 (DGPPHPPSPLPF) are compositionally biased toward pro residues. The span at 768-777 (LKKKMPRPKG) shows a compositional bias: basic residues. The HTH psq-type domain occupies 781-833 (APRGGPPRSWTNTELTEALQHVWNKKMTTSQASRIFGIPYNSLLMYVRGKYGK). Residues 866–881 (KNEKSKERKEKEKDKN) show a composition bias toward basic and acidic residues. Composition is skewed to low complexity over residues 882-897 (SMSSNGSGGSANSQGG) and 912-925 (LGPMGQLDLDLGLP).

Initially expressed at blastoderm stage, transient accumulation at dorso-lateral positions of the embryo and differences along the longitudinal axis. At later stages of embryogenesis, expression is found exclusively in neural anlagen. Expressed in 4 posterior-most ventral unpaired median interneurons (VUM) neurons, VUM interneurons and one progeny of the median neuroblast (MNB).

It is found in the nucleus. Functionally, has a regulatory role during midline cell development. This Drosophila melanogaster (Fruit fly) protein is Protein jim lovell (lov).